A 442-amino-acid chain; its full sequence is CBL-interacting serine/threonine-protein kinase 14 (442 aa).

One can recognise a Protein kinase domain in the interval 22–276 (YEVGKLVGCG…IEEIIHDPWF (255 aa)). ATP-binding positions include 28-36 (VGCGAFAKV) and lysine 51. Aspartate 144 functions as the Proton acceptor in the catalytic mechanism. The activation loop stretch occupies residues 162–191 (DFGLSALTDQIRPDGLLHTLCGTPAYVAPE). The residue at position 166 (serine 166) is a Phosphoserine. Phosphothreonine is present on threonine 180. The NAF domain maps to 305–329 (MGARRMNAFDIISGSPGFNLSGLFG). The interval 335-365 (DRVERFVSAWTAERVVERLEEIVSAENLTVA) is PPI.

It belongs to the protein kinase superfamily. CAMK Ser/Thr protein kinase family. SNF1 subfamily. In terms of assembly, interacts with CBL2. Interacts with CBL3. Interacts with CBL8. Interacts with CBL9. Interacts with KIN10 and KIN11. Mn(2+) serves as cofactor. In terms of tissue distribution, predominant in roots, cauline leaves, and flowers. Ubiquitous with highest expression in 7-day-old seedlings and flower buds, followed by that in cauline leaves and young siliques.

It localises to the cytoplasm. The protein localises to the nucleus. It catalyses the reaction L-seryl-[protein] + ATP = O-phospho-L-seryl-[protein] + ADP + H(+). It carries out the reaction L-threonyl-[protein] + ATP = O-phospho-L-threonyl-[protein] + ADP + H(+). CIPK serine-threonine protein kinases interact with CBL proteins. Binding of a CBL protein to the regulatory NAF domain of CIPK protein lead to the activation of the kinase in a calcium-dependent manner. The sequence is that of CBL-interacting serine/threonine-protein kinase 14 (CIPK14) from Arabidopsis thaliana (Mouse-ear cress).